A 606-amino-acid chain; its full sequence is DNA mismatch repair protein MutL (606 aa).

A disordered region spans residues 348-378; the sequence is QPHAQRPQAPWSAETSPFRPYPPAAGFSERP.

The protein belongs to the DNA mismatch repair MutL/HexB family.

Functionally, this protein is involved in the repair of mismatches in DNA. It is required for dam-dependent methyl-directed DNA mismatch repair. May act as a 'molecular matchmaker', a protein that promotes the formation of a stable complex between two or more DNA-binding proteins in an ATP-dependent manner without itself being part of a final effector complex. The protein is DNA mismatch repair protein MutL of Rhizobium etli (strain CIAT 652).